The following is a 1066-amino-acid chain: TBC1 domain family member 31 (1066 aa).

WD repeat units follow at residues 33–74 (HNTS…LHGN), 75–116 (RFNL…TVTK), 117–157 (ELVS…LDTF), 158–200 (QRKR…CDTL), 201–248 (FCKY…ARQL), 249–296 (FRII…MQTC), and 297–334 (KLLF…NIYS). In terms of domain architecture, Rab-GAP TBC spans 424–599 (EYPTKYRMFI…KLFDNIFSNH (176 aa)). Coiled-coil stretches lie at residues 728 to 861 (QKQE…DLEE) and 914 to 948 (NKCY…KWKE). Residues 989–998 (CHKEEPRFQN) show a composition bias toward basic and acidic residues. The disordered stretch occupies residues 989 to 1020 (CHKEEPRFQNEQDSSCLPRTSQLNDSSEMDPS). Residues 999–1020 (EQDSSCLPRTSQLNDSSEMDPS) are compositionally biased toward polar residues. The tract at residues 1053-1056 (RARH) is mediates direct interaction with PJA2.

In terms of assembly, interacts with PJA2; the interaction is direct and recruits PJA2 to centrosomes. Interacts with OFD1; regulates its activity in cilium assembly. Interacts with PRKACA.

The protein resides in the cytoplasm. It localises to the cytoskeleton. It is found in the microtubule organizing center. The protein localises to the centrosome. Its subcellular location is the centriolar satellite. The protein resides in the cilium basal body. Functionally, molecular adapter which is involved in cilium biogenesis. Part of a functional complex including OFD1 a centriolar protein involved in cilium assembly. Could regulate the cAMP-dependent phosphorylation of OFD1, and its subsequent ubiquitination by PJA2 which ultimately leads to its proteasomal degradation. The sequence is that of TBC1 domain family member 31 from Homo sapiens (Human).